The sequence spans 79 residues: Large ribosomal subunit protein uL24 (79 aa).

It belongs to the universal ribosomal protein uL24 family. In terms of assembly, part of the 50S ribosomal subunit.

Functionally, one of two assembly initiator proteins, it binds directly to the 5'-end of the 23S rRNA, where it nucleates assembly of the 50S subunit. In terms of biological role, one of the proteins that surrounds the polypeptide exit tunnel on the outside of the subunit. This chain is Large ribosomal subunit protein uL24, found in Lactobacillus johnsonii (strain CNCM I-12250 / La1 / NCC 533).